The following is a 1150-amino-acid chain: Protogenin (1150 aa).

A signal peptide spans 1–35 (MAPPLRPLARLRPPGMLLRALLLLLLLSPLPGVWC). 4 Ig-like domains span residues 36-130 (FSEL…AHLA), 135-222 (SAFE…ASLT), 235-322 (PTII…ATLT), and 327-411 (PSFV…ARLT). Residues 36–949 (FSELSFVKEP…YYHLDQKSMT (914 aa)) are Extracellular-facing. Intrachain disulfides connect Cys-60-Cys-113, Cys-156-Cys-205, Cys-256-Cys-304, and Cys-348-Cys-395. Asn-90 carries an N-linked (GlcNAc...) asparagine glycan. Fibronectin type-III domains are found at residues 421 to 515 (APYN…TLED), 517 to 613 (PLRP…TPKA), 618 to 717 (APKS…VRDR), 724 to 817 (PPHH…TLPE), and 822 to 917 (PPVG…VLPK). N-linked (GlcNAc...) asparagine glycosylation occurs at Asn-488. An N-linked (GlcNAc...) asparagine glycan is attached at Asn-630. Residues 950–970 (GIAVGVGIALTCILICVLILI) traverse the membrane as a helical segment. The Cytoplasmic segment spans residues 971 to 1150 (YRSKARKSSA…SVISTTPPNL (180 aa)). Disordered stretches follow at residues 981–1002 (SKTAQNGTQQLPRTSASLASGN) and 1086–1150 (ISDE…PPNL). Composition is skewed to polar residues over residues 983–1000 (TAQNGTQQLPRTSASLAS) and 1092–1102 (PSSPGQTTSFS). Residues 1110–1138 (DTEHSANSEGSHETGDSGRFSHESNDEIH) show a composition bias toward basic and acidic residues. Residues 1141-1150 (SVISTTPPNL) show a composition bias toward polar residues.

The protein belongs to the immunoglobulin superfamily. DCC family.

Its subcellular location is the membrane. Its function is as follows. May play a role in anteroposterior axis elongation. This Homo sapiens (Human) protein is Protogenin.